Consider the following 353-residue polypeptide: Photosystem II protein D1 (353 aa).

Position 2 is an N-acetylthreonine (Thr2). Thr2 bears the Phosphothreonine mark. Helical transmembrane passes span 29-46 (YIGW…TATS), 118-133 (HFLL…EWEL), and 142-156 (WIAV…AATA). His118 serves as a coordination point for chlorophyll a. A pheophytin a-binding site is contributed by Tyr126. Asp170 and Glu189 together coordinate [CaMn4O5] cluster. The helical transmembrane segment at 197–218 (FHMLGVAGVFGGSLFSAMHGSL) threads the bilayer. His198 is a binding site for chlorophyll a. Residues His215 and 264-265 (SF) each bind a quinone. A Fe cation-binding site is contributed by His215. His272 is a binding site for Fe cation. Residues 274–288 (LLAAWPVVGIWFTAL) traverse the membrane as a helical segment. His332, Glu333, Asp342, and Ala344 together coordinate [CaMn4O5] cluster. The propeptide occupies 345–353 (AVEAPSTNG).

This sequence belongs to the reaction center PufL/M/PsbA/D family. As to quaternary structure, PSII is composed of 1 copy each of membrane proteins PsbA, PsbB, PsbC, PsbD, PsbE, PsbF, PsbH, PsbI, PsbJ, PsbK, PsbL, PsbM, PsbT, PsbX, PsbY, PsbZ, Psb30/Ycf12, at least 3 peripheral proteins of the oxygen-evolving complex and a large number of cofactors. It forms dimeric complexes. The D1/D2 heterodimer binds P680, chlorophylls that are the primary electron donor of PSII, and subsequent electron acceptors. It shares a non-heme iron and each subunit binds pheophytin, quinone, additional chlorophylls, carotenoids and lipids. D1 provides most of the ligands for the Mn4-Ca-O5 cluster of the oxygen-evolving complex (OEC). There is also a Cl(-1) ion associated with D1 and D2, which is required for oxygen evolution. The PSII complex binds additional chlorophylls, carotenoids and specific lipids. serves as cofactor. Tyr-161 forms a radical intermediate that is referred to as redox-active TyrZ, YZ or Y-Z. Post-translationally, C-terminally processed by CTPA; processing is essential to allow assembly of the oxygen-evolving complex and thus photosynthetic growth.

The protein resides in the plastid. It localises to the chloroplast thylakoid membrane. The catalysed reaction is 2 a plastoquinone + 4 hnu + 2 H2O = 2 a plastoquinol + O2. In terms of biological role, photosystem II (PSII) is a light-driven water:plastoquinone oxidoreductase that uses light energy to abstract electrons from H(2)O, generating O(2) and a proton gradient subsequently used for ATP formation. It consists of a core antenna complex that captures photons, and an electron transfer chain that converts photonic excitation into a charge separation. The D1/D2 (PsbA/PsbD) reaction center heterodimer binds P680, the primary electron donor of PSII as well as several subsequent electron acceptors. This chain is Photosystem II protein D1, found in Dioscorea elephantipes (Elephant's foot yam).